A 347-amino-acid chain; its full sequence is MKILGIETTCDETAAAVVTLGEDERGQILANEVLSQIAEHAAYGGVVPEIAARAHVEVLDRLIARALQRAGTTLKEIDGIAVAAGPGLIGGVLIGLVTAKTLALVARKPLLAVNHLEAHALTPRLTDGLAFPYLLLLASGGHTQLVAVKGVGDYVRLGTTIDDAIGEAFDKVAKLLGLGYPGGPEVERQAESGNPERFALPRPMIGRRQADFSLSGLKTALRIEAERLEPLASQDVADLCASFQAAVVDVVVDRVRVALRAFAGVAGHPTALVAAGGVAANGAIRRALAAQAGEVGLSFVAPPLPLCGDNGAMIAWAGLERLRLGLVDDLTVPARARWPFAEVAPAA.

Fe cation is bound by residues H115 and H119. Substrate contacts are provided by residues 137–141 (LASGG), D170, G183, and N281. D309 is a binding site for Fe cation.

This sequence belongs to the KAE1 / TsaD family. Requires Fe(2+) as cofactor.

It is found in the cytoplasm. It carries out the reaction L-threonylcarbamoyladenylate + adenosine(37) in tRNA = N(6)-L-threonylcarbamoyladenosine(37) in tRNA + AMP + H(+). Functionally, required for the formation of a threonylcarbamoyl group on adenosine at position 37 (t(6)A37) in tRNAs that read codons beginning with adenine. Is involved in the transfer of the threonylcarbamoyl moiety of threonylcarbamoyl-AMP (TC-AMP) to the N6 group of A37, together with TsaE and TsaB. TsaD likely plays a direct catalytic role in this reaction. This Methylorubrum extorquens (strain CM4 / NCIMB 13688) (Methylobacterium extorquens) protein is tRNA N6-adenosine threonylcarbamoyltransferase.